The chain runs to 115 residues: GTEVVVDQQKTISALLGASPGASTAAPITLNVLKQMFPQQFNSPEWQSRIHAIVPSYGQKLNGNVALTQQVWDDTAATLQLTKPPVIQMPAAAPTATAKPAETPREASPQHDMAL.

The segment at 88–115 (QMPAAAPTATAKPAETPREASPQHDMAL) is disordered. A compositionally biased stretch (low complexity) spans 90-101 (PAAAPTATAKPA). The span at 102–115 (ETPREASPQHDMAL) shows a compositional bias: basic and acidic residues.

This sequence belongs to the MQO family. FAD is required as a cofactor.

The catalysed reaction is (S)-malate + a quinone = a quinol + oxaloacetate. Its pathway is carbohydrate metabolism; tricarboxylic acid cycle; oxaloacetate from (S)-malate (quinone route): step 1/1. The chain is Probable malate:quinone oxidoreductase (mqo) from Klebsiella pneumoniae.